Here is a 506-residue protein sequence, read N- to C-terminus: Maturase K (506 aa).

Belongs to the intron maturase 2 family. MatK subfamily.

It localises to the plastid. It is found in the chloroplast. Its function is as follows. Usually encoded in the trnK tRNA gene intron. Probably assists in splicing its own and other chloroplast group II introns. This is Maturase K from Uncarina grandidieri (Mouse trap tree).